A 393-amino-acid chain; its full sequence is S-adenosylmethionine synthase (393 aa).

Position 16 (His-16) interacts with ATP. Asp-18 contacts Mg(2+). Residue Glu-44 participates in K(+) binding. L-methionine contacts are provided by Glu-57 and Gln-100. The interval 100–110 is flexible loop; it reads QSNDIAQGVDQ. Residues 167-169, 238-239, Asp-247, 253-254, Ala-270, and Lys-274 contribute to the ATP site; these read DAK, RF, and RK. Asp-247 contacts L-methionine. An L-methionine-binding site is contributed by Lys-278.

It belongs to the AdoMet synthase family. As to quaternary structure, homotetramer; dimer of dimers. Mg(2+) serves as cofactor. K(+) is required as a cofactor.

It is found in the cytoplasm. It catalyses the reaction L-methionine + ATP + H2O = S-adenosyl-L-methionine + phosphate + diphosphate. It participates in amino-acid biosynthesis; S-adenosyl-L-methionine biosynthesis; S-adenosyl-L-methionine from L-methionine: step 1/1. Catalyzes the formation of S-adenosylmethionine (AdoMet) from methionine and ATP. The overall synthetic reaction is composed of two sequential steps, AdoMet formation and the subsequent tripolyphosphate hydrolysis which occurs prior to release of AdoMet from the enzyme. The sequence is that of S-adenosylmethionine synthase from Methylibium petroleiphilum (strain ATCC BAA-1232 / LMG 22953 / PM1).